The chain runs to 392 residues: 5-azacytidine-induced protein 2 (392 aa).

Residues 1 to 197 (MDALVEDDIC…IELQKAKQTD (197 aa)) form a homodimerization region. Coiled coils occupy residues 40–76 (ALVT…LIAR) and 102–196 (DRDN…AKQT). Residues 216–257 (SDNMQHAYWELKREMSNLHLVTQVQAELLRKLKTSTAIKKAC) form an interaction with TBK1 and IKBKE region. A phosphoserine mark is found at serine 318 and serine 353.

In terms of assembly, homodimer. Interacts with IKBKE. Interacts with TBK1. Interacts with TICAM1. Interacts with TAX1BP1. Interacts with CALCOCO2. As to quaternary structure, (Microbial infection) Interacts with vaccinia virus protein C6. Ubiquitinated via 'Lys-48'-linked polyubiquitination by TRIM38, leading to its degradation. Widely expressed. Abundant expression seen in the pancreas and testis.

It is found in the cytoplasm. In terms of biological role, adapter protein which binds TBK1 and IKBKE playing a role in antiviral innate immunity. Activates serine/threonine-protein kinase TBK1 and facilitates its oligomerization. Enhances the phosphorylation of NF-kappa-B p65 subunit RELA by TBK1. Promotes TBK1-induced as well as TNF-alpha or PMA-induced activation of NF-kappa-B. Participates in IFNB promoter activation via TICAM1. This is 5-azacytidine-induced protein 2 (AZI2) from Homo sapiens (Human).